We begin with the raw amino-acid sequence, 98 residues long: MQKSCNEKEGKPKGSEAKREDEQPCGALEGQRLEGNFRQRLLQSLEEFKEDIDYRHFKGEEMTGEEEEMERCLEEIRSLRKKFRALHSNRTHSRDHPF.

The segment covering 1 to 22 (MQKSCNEKEGKPKGSEAKREDE) has biased composition (basic and acidic residues). Residues 1-33 (MQKSCNEKEGKPKGSEAKREDEQPCGALEGQRL) are disordered. The stretch at 59-89 (GEEMTGEEEEMERCLEEIRSLRKKFRALHSN) forms a coiled coil.

The protein belongs to the TFS-II family. TFA subfamily.

The protein localises to the nucleus. In terms of biological role, plays a role in the negative regulation of NF-kappa-B signaling at the basal level by modulating transcriptional activity of NF-kappa-B on its target gene promoters. Associates with cyclin D1 promoter containing Myc E-box sequence and transcriptionally represses cyclin D1 expression. Regulates telomerase reverse transcriptase expression and telomerase activity in both ALT (alternative lengthening of telomeres)and telomerase-positive cell lines. The chain is Transcription elongation factor A protein-like 7 (Tceal7) from Mus musculus (Mouse).